Here is a 290-residue protein sequence, read N- to C-terminus: 33 kDa chaperonin (290 aa).

Disulfide bonds link Cys235–Cys237 and Cys268–Cys271.

Belongs to the HSP33 family. Under oxidizing conditions two disulfide bonds are formed involving the reactive cysteines. Under reducing conditions zinc is bound to the reactive cysteines and the protein is inactive.

Its subcellular location is the cytoplasm. Its function is as follows. Redox regulated molecular chaperone. Protects both thermally unfolding and oxidatively damaged proteins from irreversible aggregation. Plays an important role in the bacterial defense system toward oxidative stress. This is 33 kDa chaperonin from Streptococcus pyogenes serotype M49 (strain NZ131).